The chain runs to 318 residues: Acetyl-coenzyme A carboxylase carboxyl transferase subunit alpha (318 aa).

Residues 32–293 (NINEEIQRLE…REALREEWAR (262 aa)) enclose the CoA carboxyltransferase C-terminal domain.

Belongs to the AccA family. As to quaternary structure, acetyl-CoA carboxylase is a heterohexamer composed of biotin carboxyl carrier protein (AccB), biotin carboxylase (AccC) and two subunits each of ACCase subunit alpha (AccA) and ACCase subunit beta (AccD).

It is found in the cytoplasm. It catalyses the reaction N(6)-carboxybiotinyl-L-lysyl-[protein] + acetyl-CoA = N(6)-biotinyl-L-lysyl-[protein] + malonyl-CoA. It functions in the pathway lipid metabolism; malonyl-CoA biosynthesis; malonyl-CoA from acetyl-CoA: step 1/1. Component of the acetyl coenzyme A carboxylase (ACC) complex. First, biotin carboxylase catalyzes the carboxylation of biotin on its carrier protein (BCCP) and then the CO(2) group is transferred by the carboxyltransferase to acetyl-CoA to form malonyl-CoA. The chain is Acetyl-coenzyme A carboxylase carboxyl transferase subunit alpha from Halorhodospira halophila (strain DSM 244 / SL1) (Ectothiorhodospira halophila (strain DSM 244 / SL1)).